A 207-amino-acid chain; its full sequence is Thymidine kinase (207 aa).

Residues 15-22 and 88-91 contribute to the ATP site; these read GSMFSGKS and DEVQ. Residue glutamate 89 is the Proton acceptor of the active site. Residues cysteine 145, cysteine 148, cysteine 183, and histidine 186 each contribute to the Zn(2+) site.

It belongs to the thymidine kinase family. As to quaternary structure, homotetramer.

It localises to the cytoplasm. The catalysed reaction is thymidine + ATP = dTMP + ADP + H(+). The chain is Thymidine kinase from Oceanobacillus iheyensis (strain DSM 14371 / CIP 107618 / JCM 11309 / KCTC 3954 / HTE831).